Reading from the N-terminus, the 291-residue chain is uncharacterized protein (291 aa).

The protein belongs to the pseudouridine synthase RluA family.

The catalysed reaction is a uridine in RNA = a pseudouridine in RNA. This is an uncharacterized protein from Synechocystis sp. (strain ATCC 27184 / PCC 6803 / Kazusa).